A 181-amino-acid chain; its full sequence is Large ribosomal subunit protein uL22 (181 aa).

Residues 157–181 form a disordered region; it reads PEAAKKPGKKTSAVEKSKKATAATH.

Belongs to the universal ribosomal protein uL22 family.

This Biphyllus lunatus (Beetle) protein is Large ribosomal subunit protein uL22 (RpL17).